Here is an 85-residue protein sequence, read N- to C-terminus: Small integral membrane protein 35 (85 aa).

The chain crosses the membrane as a helical span at residues 7 to 27; the sequence is ISTLGMILGVGLSLLLVSILG.

Its subcellular location is the membrane. This Mus musculus (Mouse) protein is Small integral membrane protein 35.